A 198-amino-acid polypeptide reads, in one-letter code: Probable chorismate pyruvate-lyase (198 aa).

Residues arginine 73, leucine 111, and glutamate 172 each coordinate substrate.

This sequence belongs to the UbiC family.

The protein resides in the cytoplasm. It catalyses the reaction chorismate = 4-hydroxybenzoate + pyruvate. Its pathway is cofactor biosynthesis; ubiquinone biosynthesis. Removes the pyruvyl group from chorismate, with concomitant aromatization of the ring, to provide 4-hydroxybenzoate (4HB) for the ubiquinone pathway. The chain is Probable chorismate pyruvate-lyase from Burkholderia orbicola (strain AU 1054).